A 1077-amino-acid polypeptide reads, in one-letter code: Ubiquitin carboxyl-terminal hydrolase 28 (1077 aa).

The segment at D60–G80 is disordered. A Phosphoserine modification is found at S67. The UIM domain occupies D97–I116. K99 is covalently cross-linked (Glycyl lysine isopeptide (Lys-Gly) (interchain with G-Cter in SUMO2)). A USP domain is found at V162–D650. C171 serves as the catalytic Nucleophile. A Phosphoserine modification is found at S375. The disordered stretch occupies residues H477–D535. Over residues S481–T501 the composition is skewed to low complexity. Residues P514–M524 show a composition bias toward polar residues. S550 is subject to Phosphoserine. Catalysis depends on H600, which acts as the Proton acceptor. The disordered stretch occupies residues E697–S728. Low complexity predominate over residues E707–S724. At S714 the chain carries Phosphoserine. Residue K759 forms a Glycyl lysine isopeptide (Lys-Gly) (interchain with G-Cter in SUMO2) linkage. T1048 is subject to Phosphothreonine.

Belongs to the peptidase C19 family. USP28 subfamily. As to quaternary structure, interacts with ZNF304. Interacts with PRKD1. Interacts with TP53BP1. Interacts with isoform 1 of FBXW7; following DNA damage, dissociates from FBXW7 leading to degradation of MYC. In terms of processing, degraded upon nickel ion level or hypoxia exposure. Phosphorylated upon DNA damage at Ser-67 and Ser-714, by ATM or ATR. Phosphorylated by PRKD1.

The protein resides in the nucleus. It localises to the nucleoplasm. The catalysed reaction is Thiol-dependent hydrolysis of ester, thioester, amide, peptide and isopeptide bonds formed by the C-terminal Gly of ubiquitin (a 76-residue protein attached to proteins as an intracellular targeting signal).. Functionally, deubiquitinase involved in DNA damage response checkpoint and MYC proto-oncogene stability. Involved in DNA damage induced apoptosis by specifically deubiquitinating proteins of the DNA damage pathway such as CLSPN. Also involved in G2 DNA damage checkpoint, by deubiquitinating CLSPN, and preventing its degradation by the anaphase promoting complex/cyclosome (APC/C). In contrast, it does not deubiquitinate PLK1. Specifically deubiquitinates MYC in the nucleoplasm, leading to prevent MYC degradation by the proteasome: acts by specifically interacting with isoform 1 of FBXW7 (FBW7alpha) in the nucleoplasm and counteracting ubiquitination of MYC by the SCF(FBW7) complex. In contrast, it does not interact with isoform 4 of FBXW7 (FBW7gamma) in the nucleolus, allowing MYC degradation and explaining the selective MYC degradation in the nucleolus. Deubiquitinates ZNF304, hence preventing ZNF304 degradation by the proteasome and leading to the activated KRAS-mediated promoter hypermethylation and transcriptional silencing of tumor suppressor genes (TSGs) in a subset of colorectal cancers (CRC) cells. The protein is Ubiquitin carboxyl-terminal hydrolase 28 (USP28) of Homo sapiens (Human).